A 243-amino-acid polypeptide reads, in one-letter code: Outer membrane protein A (243 aa).

5 beta stranded membrane passes run 1–8, 13–21, 47–56, 61–68, and 87–95; these read LTAKLGYP, LDIYTRLGG, PVFAGGLEWA, IATRLEYQ, and LLSVGVSYR. A run of 4 repeats spans residues 107–108, 109–110, 111–112, and 113–114. Residues 107 to 114 form a 4 X 2 AA tandem repeats of A-P region; sequence APAPAPAP. An OmpA-like domain is found at 116–243; it reads VQTKHFTLKS…RRVEIEVKGI (128 aa). A disulfide bridge links C217 with C229.

The protein belongs to the outer membrane OOP (TC 1.B.6) superfamily. OmpA family. As to quaternary structure, monomer and homodimer.

The protein localises to the cell outer membrane. Functionally, with TolR probably plays a role in maintaining the position of the peptidoglycan cell wall in the periplasm. Acts as a porin with low permeability that allows slow penetration of small solutes; an internal gate slows down solute passage. This is Outer membrane protein A from Atlantibacter hermannii (Escherichia hermannii).